The sequence spans 1066 residues: TBC1 domain family member 31 (1066 aa).

WD repeat units follow at residues 33–74, 75–116, 117–157, 158–200, 201–248, 249–296, and 297–334; these read HNTS…LHGN, RFNL…TVTK, ELVS…LDTF, QRKR…CDTL, FCKY…ARQL, FRII…MQTC, and KLLFEIGSLDEGISSSAISPHGRYIASIMENGSLNIYS. Positions 424–599 constitute a Rab-GAP TBC domain; that stretch reads EYPTKYRMFI…KLFDNIFSNH (176 aa). Coiled coils occupy residues 728–861 and 914–948; these read QKQE…DLEE and NKCYQEVAKLLRENRRKEIEIINAMVEEEAKKWKE. Residues 989–998 show a composition bias toward basic and acidic residues; it reads CHKEEPRFQN. The interval 989–1020 is disordered; it reads CHKEEPRFQNEQDSSCLPRTSQLNDSSEMDPS. The span at 999 to 1020 shows a compositional bias: polar residues; sequence EQDSSCLPRTSQLNDSSEMDPS. Residues 1053–1056 are mediates direct interaction with PJA2; the sequence is RARH.

In terms of assembly, interacts with PJA2; the interaction is direct and recruits PJA2 to centrosomes. Interacts with OFD1; regulates its activity in cilium assembly. Interacts with PRKACA.

The protein resides in the cytoplasm. It is found in the cytoskeleton. The protein localises to the microtubule organizing center. Its subcellular location is the centrosome. It localises to the centriolar satellite. The protein resides in the cilium basal body. Its function is as follows. Molecular adapter which is involved in cilium biogenesis. Part of a functional complex including OFD1 a centriolar protein involved in cilium assembly. Could regulate the cAMP-dependent phosphorylation of OFD1, and its subsequent ubiquitination by PJA2 which ultimately leads to its proteasomal degradation. The sequence is that of TBC1 domain family member 31 from Homo sapiens (Human).